A 376-amino-acid polypeptide reads, in one-letter code: DNA replication and repair protein RecF (376 aa).

30–37 (GNNAQGKS) is a binding site for ATP.

It belongs to the RecF family.

The protein resides in the cytoplasm. Its function is as follows. The RecF protein is involved in DNA metabolism; it is required for DNA replication and normal SOS inducibility. RecF binds preferentially to single-stranded, linear DNA. It also seems to bind ATP. The polypeptide is DNA replication and repair protein RecF (Trichormus variabilis (strain ATCC 29413 / PCC 7937) (Anabaena variabilis)).